The following is a 234-amino-acid chain: Probable pectate lyase F (234 aa).

An N-terminal signal peptide occupies residues 1–17 (MFSRIALLPAFLPVALA). N-linked (GlcNAc...) asparagine glycosylation is found at N168 and N194.

This sequence belongs to the polysaccharide lyase 3 family. The cofactor is Ca(2+).

Its subcellular location is the secreted. The catalysed reaction is Eliminative cleavage of (1-&gt;4)-alpha-D-galacturonan to give oligosaccharides with 4-deoxy-alpha-D-galact-4-enuronosyl groups at their non-reducing ends.. Functionally, pectinolytic enzyme consist of four classes of enzymes: pectin lyase, polygalacturonase, pectin methylesterase and rhamnogalacturonase. Among pectinolytic enzymes, pectin lyase is the most important in depolymerization of pectin, since it cleaves internal glycosidic bonds of highly methylated pectins. Favors pectate, the anion, over pectin, the methyl ester. The polypeptide is Probable pectate lyase F (plyF) (Aspergillus flavus (strain ATCC 200026 / FGSC A1120 / IAM 13836 / NRRL 3357 / JCM 12722 / SRRC 167)).